Consider the following 250-residue polypeptide: Small ribosomal subunit protein uS2 (250 aa).

This sequence belongs to the universal ribosomal protein uS2 family.

The chain is Small ribosomal subunit protein uS2 from Acidovorax ebreus (strain TPSY) (Diaphorobacter sp. (strain TPSY)).